A 333-amino-acid chain; its full sequence is DNA-directed RNA polymerase subunit alpha (333 aa).

Positions Met-1–Glu-233 are alpha N-terminal domain (alpha-NTD). The interval Ile-269–Ala-333 is alpha C-terminal domain (alpha-CTD).

This sequence belongs to the RNA polymerase alpha chain family. In plastids the minimal PEP RNA polymerase catalytic core is composed of four subunits: alpha, beta, beta', and beta''. When a (nuclear-encoded) sigma factor is associated with the core the holoenzyme is formed, which can initiate transcription.

The protein resides in the plastid. It localises to the chloroplast. It carries out the reaction RNA(n) + a ribonucleoside 5'-triphosphate = RNA(n+1) + diphosphate. In terms of biological role, DNA-dependent RNA polymerase catalyzes the transcription of DNA into RNA using the four ribonucleoside triphosphates as substrates. In Cucumis sativus (Cucumber), this protein is DNA-directed RNA polymerase subunit alpha.